We begin with the raw amino-acid sequence, 320 residues long: Glycerol-3-phosphate dehydrogenase [NAD(P)+] (320 aa).

Positions 14, 15, 35, and 109 each coordinate NADPH. Positions 109 and 137 each coordinate sn-glycerol 3-phosphate. Ala141 provides a ligand contact to NADPH. Sn-glycerol 3-phosphate is bound by residues Lys192, Asp248, Ser258, Arg259, and Asn260. Catalysis depends on Lys192, which acts as the Proton acceptor. Residue Arg259 coordinates NADPH. Residues Leu283 and Glu285 each contribute to the NADPH site.

This sequence belongs to the NAD-dependent glycerol-3-phosphate dehydrogenase family.

The protein localises to the cytoplasm. The catalysed reaction is sn-glycerol 3-phosphate + NAD(+) = dihydroxyacetone phosphate + NADH + H(+). The enzyme catalyses sn-glycerol 3-phosphate + NADP(+) = dihydroxyacetone phosphate + NADPH + H(+). It functions in the pathway membrane lipid metabolism; glycerophospholipid metabolism. In terms of biological role, catalyzes the reduction of the glycolytic intermediate dihydroxyacetone phosphate (DHAP) to sn-glycerol 3-phosphate (G3P), the key precursor for phospholipid synthesis. This Rickettsia typhi (strain ATCC VR-144 / Wilmington) protein is Glycerol-3-phosphate dehydrogenase [NAD(P)+].